Reading from the N-terminus, the 201-residue chain is Large ribosomal subunit protein uL4 (201 aa).

The disordered stretch occupies residues 42–67; it reads GNSAQKTRSEVSGGGKKPWNQKGTGR.

This sequence belongs to the universal ribosomal protein uL4 family. As to quaternary structure, part of the 50S ribosomal subunit.

Its function is as follows. One of the primary rRNA binding proteins, this protein initially binds near the 5'-end of the 23S rRNA. It is important during the early stages of 50S assembly. It makes multiple contacts with different domains of the 23S rRNA in the assembled 50S subunit and ribosome. In terms of biological role, forms part of the polypeptide exit tunnel. This is Large ribosomal subunit protein uL4 from Legionella pneumophila (strain Lens).